The following is a 196-amino-acid chain: Orotate phosphoribosyltransferase (196 aa).

5-phospho-alpha-D-ribose 1-diphosphate is bound at residue 117–125 (EDVVTTGLS). Orotate-binding residues include Thr121 and Arg149.

This sequence belongs to the purine/pyrimidine phosphoribosyltransferase family. PyrE subfamily. As to quaternary structure, homodimer. The cofactor is Mg(2+).

The catalysed reaction is orotidine 5'-phosphate + diphosphate = orotate + 5-phospho-alpha-D-ribose 1-diphosphate. Its pathway is pyrimidine metabolism; UMP biosynthesis via de novo pathway; UMP from orotate: step 1/2. In terms of biological role, catalyzes the transfer of a ribosyl phosphate group from 5-phosphoribose 1-diphosphate to orotate, leading to the formation of orotidine monophosphate (OMP). In Sphingopyxis alaskensis (strain DSM 13593 / LMG 18877 / RB2256) (Sphingomonas alaskensis), this protein is Orotate phosphoribosyltransferase.